The following is a 122-amino-acid chain: Lithostathine (122 aa).

The N-terminal stretch at 1-26 is a signal peptide; the sequence is MLPSMSLPSLXWMLLSCLMLLSQVQG. A propeptide spanning residues 27 to 37 is cleaved from the precursor; it reads EDSPADTPSAR. Residues 38–122 enclose the C-type lectin domain; it reads ISCPKGSMAY…LEPNAGGWEW (85 aa). An intrachain disulfide couples C40 to C51.

Cleaved to give an A chain and a B chain joined by a disulfide bond. In terms of tissue distribution, in pancreatic acinar cells.

It is found in the secreted. Might act as an inhibitor of spontaneous calcium carbonate precipitation. This Sus scrofa (Pig) protein is Lithostathine (PTP).